Consider the following 439-residue polypeptide: Paraneoplastic antigen-like protein 8A (439 aa).

The segment at 208 to 439 (SALKAETPNN…RRATNESRKV (232 aa)) is disordered. Residues 231–249 (LVRRAGAKSRSRRKKQKKN) show a composition bias toward basic residues. Basic and acidic residues-rich tracts occupy residues 314 to 326 (GPREPPQDARAEA), 395 to 404 (SRREASDQKA), and 423 to 439 (AKPEGSPRRATNESRKV).

This sequence belongs to the PNMA family.

In Homo sapiens (Human), this protein is Paraneoplastic antigen-like protein 8A.